The sequence spans 72 residues: MKVGIHPEYTAVKATCSCGNEFEFNSALGKDSIHLDVCDKCHPFYTGKQRIVDTGGRVDRFNKRFGAIGSKK.

Residues Cys-16, Cys-18, Cys-38, and Cys-41 each contribute to the Zn(2+) site.

It belongs to the bacterial ribosomal protein bL31 family. Type A subfamily. In terms of assembly, part of the 50S ribosomal subunit. Zn(2+) serves as cofactor.

Its function is as follows. Binds the 23S rRNA. The protein is Large ribosomal subunit protein bL31 of Aliivibrio fischeri (strain ATCC 700601 / ES114) (Vibrio fischeri).